We begin with the raw amino-acid sequence, 251 residues long: MTLDLDASKKDDKLLLTTVQQEYKILAEYKMIESEKIGGVYVIPSYANSLQWFGVFFGRKDFYSEGVFRFTLLLPDRFPDDKTLPSIIFQQKIFHPLICPYTHSLDISHAFPEWRCGDDHLWQLLKYMQAVFSDPLESIRHVEMDKLKNSEAADLLINNREEFANRTRENIRESLAHIYDTPITEDPHYITFEKFQSEVHGPVLEGIKAGQSKHLESQSQQSNNGGNGGGGGAATGLSWVKEGEFKPLSVE.

Residues 20-176 (QQEYKILAEY…TRENIRESLA (157 aa)) form the UBC core domain. Positions 211–251 (QSKHLESQSQQSNNGGNGGGGGAATGLSWVKEGEFKPLSVE) are disordered. The span at 225–234 (GGNGGGGGAA) shows a compositional bias: gly residues.

Belongs to the ubiquitin-conjugating enzyme family. FTS subfamily.

This chain is Protein crossbronx (cbx), found in Drosophila willistoni (Fruit fly).